The chain runs to 62 residues: Large ribosomal subunit protein bL28 (62 aa).

Belongs to the bacterial ribosomal protein bL28 family.

This Clostridioides difficile (strain 630) (Peptoclostridium difficile) protein is Large ribosomal subunit protein bL28.